Consider the following 489-residue polypeptide: ATF/CREB activator 1 (489 aa).

In terms of domain architecture, bZIP spans Ala384 to His447. The tract at residues Lys386–Lys406 is basic motif. The tract at residues Leu412–Ile419 is leucine-zipper.

Belongs to the bZIP family.

The protein localises to the nucleus. In terms of biological role, transcriptional activator of promoters containing ATF/CREB sites. Can independently stimulate transcription through ATF/CREB sites. Important for a variety of biological functions including growth on non-optimal carbon sources. Regulates the expression of COS8. Has efficient silencing blocking activities. This is ATF/CREB activator 1 (ACA1) from Saccharomyces cerevisiae (strain ATCC 204508 / S288c) (Baker's yeast).